The following is a 291-amino-acid chain: tRNA dimethylallyltransferase (291 aa).

9 to 16 (GPTASGKT) contributes to the ATP binding site. Residue 11 to 16 (TASGKT) participates in substrate binding. Residues 34-37 (DSLQ) are interaction with substrate tRNA.

It belongs to the IPP transferase family. In terms of assembly, monomer. Mg(2+) is required as a cofactor.

The enzyme catalyses adenosine(37) in tRNA + dimethylallyl diphosphate = N(6)-dimethylallyladenosine(37) in tRNA + diphosphate. In terms of biological role, catalyzes the transfer of a dimethylallyl group onto the adenine at position 37 in tRNAs that read codons beginning with uridine, leading to the formation of N6-(dimethylallyl)adenosine (i(6)A). In Onion yellows phytoplasma (strain OY-M), this protein is tRNA dimethylallyltransferase.